Consider the following 558-residue polypeptide: Aurovertin biosynthesis cluster transcription factor aurF (558 aa).

It belongs to the POU transcription factor family. Class-3 subfamily.

It localises to the nucleus. In terms of biological role, transcription factor that regulates the expression of the gene cluster that mediates the biosynthesis of aurovertins, fungal polyketides that exhibit potent inhibition of adenosine triphosphate synthase. The protein is Aurovertin biosynthesis cluster transcription factor aurF of Calcarisporium arbuscula (Dendryphion arbuscula).